A 230-amino-acid chain; its full sequence is Ribose-5-phosphate isomerase A (230 aa).

Substrate contacts are provided by residues 29–32 (SGST), 86–89 (DGAD), and 99–102 (KGGG). The Proton acceptor role is filled by E108. A substrate-binding site is contributed by K126.

This sequence belongs to the ribose 5-phosphate isomerase family. Homodimer.

The enzyme catalyses aldehydo-D-ribose 5-phosphate = D-ribulose 5-phosphate. Its pathway is carbohydrate degradation; pentose phosphate pathway; D-ribose 5-phosphate from D-ribulose 5-phosphate (non-oxidative stage): step 1/1. Catalyzes the reversible conversion of ribose-5-phosphate to ribulose 5-phosphate. This Desulfatibacillum aliphaticivorans protein is Ribose-5-phosphate isomerase A.